The sequence spans 251 residues: Capsid protein (251 aa).

The segment at 1–35 is disordered; sequence MPKRDAPWRHMAGTSKVSRSGNYSPSGGMGSKSNK. The short motif at 3 to 20 is the Bipartite nuclear localization signal element; sequence KRDAPWRHMAGTSKVSRS. The segment covering 15–35 has biased composition (polar residues); it reads SKVSRSGNYSPSGGMGSKSNK. The Nuclear localization signal motif lies at 35-49; that stretch reads KANAWVNRPMYRKPR. A zinc finger spans residues 54–71; sequence YKSPDVPKGCEGPCKVQS. The Nuclear export signal motif lies at 96–117; sequence ITHRVGKRFCVKSVYILGKIWM. The Bipartite nuclear localization signal signature appears at 195 to 242; sequence RRFWKVNNHVVYNHQEAGKYENHTENALLLYMACTHASNPVYATLKIR.

Belongs to the geminiviridae capsid protein family. As to quaternary structure, homomultimer. Binds to single-stranded and double-stranded viral DNA. Interacts (via nuclear localization signals) with host importin alpha-1a.

The protein localises to the virion. It localises to the host nucleus. Its function is as follows. Encapsidates the viral DNA into characteristic twinned ('geminate') particles. Binds the genomic viral ssDNA and shuttles it into and out of the cell nucleus. The CP of bipartite geminiviruses is not required for cell-to-cell or systemic movement. This Macroptilium lathyroides (Lima bean) protein is Capsid protein.